The chain runs to 476 residues: BTB/POZ domain-containing protein KCTD8 (476 aa).

In terms of domain architecture, BTB spans E44–E122. Position 78 is a phosphoserine (S78). R80 carries the omega-N-methylarginine modification. The disordered stretch occupies residues S331 to N412. The span at K333–S349 shows a compositional bias: basic and acidic residues. Residues E350–T391 show a composition bias toward polar residues. S413 is subject to Phosphoserine.

Interacts as a tetramer with GABBR1 and GABBR2.

The protein localises to the presynaptic cell membrane. The protein resides in the postsynaptic cell membrane. In terms of biological role, auxiliary subunit of GABA-B receptors that determine the pharmacology and kinetics of the receptor response. Increases agonist potency and markedly alter the G-protein signaling of the receptors by accelerating onset and promoting desensitization. The sequence is that of BTB/POZ domain-containing protein KCTD8 (Kctd8) from Mus musculus (Mouse).